Here is an 89-residue protein sequence, read N- to C-terminus: Elongation factor 1-beta (89 aa).

It belongs to the EF-1-beta/EF-1-delta family.

Its function is as follows. Promotes the exchange of GDP for GTP in EF-1-alpha/GDP, thus allowing the regeneration of EF-1-alpha/GTP that could then be used to form the ternary complex EF-1-alpha/GTP/AAtRNA. In Methanococcus maripaludis (strain DSM 14266 / JCM 13030 / NBRC 101832 / S2 / LL), this protein is Elongation factor 1-beta.